The chain runs to 141 residues: Putative nickel-responsive regulator (141 aa).

Residues His-80, His-91, His-93, and Cys-99 each coordinate Ni(2+).

This sequence belongs to the transcriptional regulatory CopG/NikR family. Ni(2+) serves as cofactor.

Transcriptional regulator. This is Putative nickel-responsive regulator from Methanococcus aeolicus (strain ATCC BAA-1280 / DSM 17508 / OCM 812 / Nankai-3).